Here is a 158-residue protein sequence, read N- to C-terminus: ATP synthase subunit delta (158 aa).

This sequence belongs to the ATPase delta chain family. F-type ATPases have 2 components, F(1) - the catalytic core - and F(0) - the membrane proton channel. F(1) has five subunits: alpha(3), beta(3), gamma(1), delta(1), epsilon(1). F(0) has three main subunits: a(1), b(2) and c(10-14). The alpha and beta chains form an alternating ring which encloses part of the gamma chain. F(1) is attached to F(0) by a central stalk formed by the gamma and epsilon chains, while a peripheral stalk is formed by the delta and b chains.

Its subcellular location is the cell membrane. Functionally, f(1)F(0) ATP synthase produces ATP from ADP in the presence of a proton or sodium gradient. F-type ATPases consist of two structural domains, F(1) containing the extramembraneous catalytic core and F(0) containing the membrane proton channel, linked together by a central stalk and a peripheral stalk. During catalysis, ATP synthesis in the catalytic domain of F(1) is coupled via a rotary mechanism of the central stalk subunits to proton translocation. Its function is as follows. This protein is part of the stalk that links CF(0) to CF(1). It either transmits conformational changes from CF(0) to CF(1) or is implicated in proton conduction. This Roseiflexus castenholzii (strain DSM 13941 / HLO8) protein is ATP synthase subunit delta.